Consider the following 285-residue polypeptide: 2-oxoglutarate synthase subunit KorB (285 aa).

Heterotetramer of the KorA, KorB, KorC and KorD subunits.

The enzyme catalyses 2 oxidized [2Fe-2S]-[ferredoxin] + 2-oxoglutarate + CoA = succinyl-CoA + 2 reduced [2Fe-2S]-[ferredoxin] + CO2 + H(+). The protein is 2-oxoglutarate synthase subunit KorB (korB) of Methanothermobacter marburgensis (strain ATCC BAA-927 / DSM 2133 / JCM 14651 / NBRC 100331 / OCM 82 / Marburg) (Methanobacterium thermoautotrophicum).